The primary structure comprises 296 residues: Cytidine deaminase (296 aa).

CMP/dCMP-type deaminase domains lie at 52–172 (TAVE…FGPK) and 191–296 (THAD…YFAL). Residue 93-95 (NQE) coordinates substrate. His106 provides a ligand contact to Zn(2+). The Proton donor role is filled by Glu108. Zn(2+) contacts are provided by Cys133 and Cys136.

Belongs to the cytidine and deoxycytidylate deaminase family. Homodimer. Zn(2+) is required as a cofactor.

It carries out the reaction cytidine + H2O + H(+) = uridine + NH4(+). The catalysed reaction is 2'-deoxycytidine + H2O + H(+) = 2'-deoxyuridine + NH4(+). In terms of biological role, this enzyme scavenges exogenous and endogenous cytidine and 2'-deoxycytidine for UMP synthesis. The polypeptide is Cytidine deaminase (Actinobacillus succinogenes (strain ATCC 55618 / DSM 22257 / CCUG 43843 / 130Z)).